We begin with the raw amino-acid sequence, 211 residues long: 2,3-bisphosphoglycerate-dependent phosphoglycerate mutase (211 aa).

Substrate is bound by residues 9–16 (RHGQSDWN), 22–23 (TG), R61, 88–91 (ERDY), K99, 115–116 (RR), and 159–160 (GN). H10 acts as the Tele-phosphohistidine intermediate in catalysis. E88 serves as the catalytic Proton donor/acceptor.

This sequence belongs to the phosphoglycerate mutase family. BPG-dependent PGAM subfamily. In terms of assembly, homodimer.

The enzyme catalyses (2R)-2-phosphoglycerate = (2R)-3-phosphoglycerate. The protein operates within carbohydrate degradation; glycolysis; pyruvate from D-glyceraldehyde 3-phosphate: step 3/5. Functionally, catalyzes the interconversion of 2-phosphoglycerate and 3-phosphoglycerate. In Rhizobium rhizogenes (strain K84 / ATCC BAA-868) (Agrobacterium radiobacter), this protein is 2,3-bisphosphoglycerate-dependent phosphoglycerate mutase.